The chain runs to 160 residues: Probable dihydroneopterin aldolase 3 (160 aa).

Substrate contacts are provided by residues E59, F91, and Y110–E111. K137 serves as the catalytic Proton donor/acceptor.

It belongs to the DHNA family. As to quaternary structure, homooctamer. Forms a hollow cylinder assembled from two ring-shaped tetramers. As to expression, expressed at very low levels in siliques.

The enzyme catalyses 7,8-dihydroneopterin = 6-hydroxymethyl-7,8-dihydropterin + glycolaldehyde. Its pathway is cofactor biosynthesis; tetrahydrofolate biosynthesis; 2-amino-4-hydroxy-6-hydroxymethyl-7,8-dihydropteridine diphosphate from 7,8-dihydroneopterin triphosphate: step 3/4. Its function is as follows. Catalyzes the conversion of 7,8-dihydroneopterin into 6-hydroxymethyl-7,8-dihydropterin, a biosynthetic precursor of the vitamin tetrahydrofolate. Can use L-threo-dihydroneopterin and D-erythro-dihydroneopterin as substrates for the formation of 6-hydroxymethyldihydropterin, but it can also catalyze the epimerization of carbon 2' of dihydroneopterin and dihydromonapterin. This is Probable dihydroneopterin aldolase 3 from Arabidopsis thaliana (Mouse-ear cress).